Consider the following 70-residue polypeptide: Large ribosomal subunit protein eL38 (70 aa).

Belongs to the eukaryotic ribosomal protein eL38 family.

The sequence is that of Large ribosomal subunit protein eL38 (RpL38) from Aedes aegypti (Yellowfever mosquito).